Reading from the N-terminus, the 287-residue chain is MAVTTASTAPPLPNLSSISAIGSWAEAVEQETLGGAHESTKDGIKIVTDIISDDTGKYKVVTTFKVVTKKVSRPIAERKKWKKFGQCKNDGPGPHVSTTYVAEEVLMQFIRNRAGEQQLDIGDEGTKVATTTGGSFTHCRYCKSDEHWSVSCPYKSMYAKDDEEDLESKEKDTKLGPTVPGSGKYVAPGMRGDRPAVTGGAERRSEENTCRVTNLPEECDEMELRALFGTVGTVNRVFIAKDKHTNKPKGFAFVTFEHRSQTEAAIQKLNGYKLDHLVLKVEWTRFV.

A disordered region spans residues 163–207; that stretch reads EEDLESKEKDTKLGPTVPGSGKYVAPGMRGDRPAVTGGAERRSEE. An RRM domain is found at 208 to 286; it reads NTCRVTNLPE…LVLKVEWTRF (79 aa).

Belongs to the eIF-3 subunit G family. Component of the eukaryotic translation initiation factor 3 (eIF-3) complex.

The protein localises to the cytoplasm. In terms of biological role, RNA-binding component of the eukaryotic translation initiation factor 3 (eIF-3) complex, which is involved in protein synthesis of a specialized repertoire of mRNAs and, together with other initiation factors, stimulates binding of mRNA and methionyl-tRNAi to the 40S ribosome. The eIF-3 complex specifically targets and initiates translation of a subset of mRNAs involved in cell proliferation. This subunit can bind 18S rRNA. The sequence is that of Eukaryotic translation initiation factor 3 subunit G from Brugia malayi (Filarial nematode worm).